The chain runs to 372 residues: F-box/kelch-repeat protein At5g48990 (372 aa).

The F-box domain occupies 14–60 (SSPNPSLPEDLIVSILARVSRSYYTNLSVVSKTFRSILTSPELYKTR). One copy of the Kelch repeat lies at 176–222 (RTYFPGSSEKPDSLNCVEVYNTNTQTWNPVPPQKRKLKFGNMEGKIY).

The chain is F-box/kelch-repeat protein At5g48990 from Arabidopsis thaliana (Mouse-ear cress).